Here is a 182-residue protein sequence, read N- to C-terminus: Adenylate kinase (182 aa).

Position 12–17 (12–17 (GAGKGT)) interacts with ATP. Positions 32-61 (STGDLLREEVSGGTDLGKKAELIMNKGELV) are NMP. Residues T33, R38, 59-61 (ELV), 85-88 (GFPR), and Q92 contribute to the AMP site. Residues 126–132 (GRGRKDD) form an LID region. ATP is bound at residue R127. AMP contacts are provided by R129 and R140. ATP is bound at residue G168.

The protein belongs to the adenylate kinase family. In terms of assembly, monomer.

Its subcellular location is the cytoplasm. It catalyses the reaction AMP + ATP = 2 ADP. Its pathway is purine metabolism; AMP biosynthesis via salvage pathway; AMP from ADP: step 1/1. Functionally, catalyzes the reversible transfer of the terminal phosphate group between ATP and AMP. Plays an important role in cellular energy homeostasis and in adenine nucleotide metabolism. This chain is Adenylate kinase, found in Prochlorococcus marinus (strain SARG / CCMP1375 / SS120).